The sequence spans 430 residues: Glutamate-1-semialdehyde 2,1-aminomutase (430 aa).

K265 carries the N6-(pyridoxal phosphate)lysine modification.

It belongs to the class-III pyridoxal-phosphate-dependent aminotransferase family. HemL subfamily. In terms of assembly, homodimer. Requires pyridoxal 5'-phosphate as cofactor.

It is found in the cytoplasm. It catalyses the reaction (S)-4-amino-5-oxopentanoate = 5-aminolevulinate. It functions in the pathway porphyrin-containing compound metabolism; protoporphyrin-IX biosynthesis; 5-aminolevulinate from L-glutamyl-tRNA(Glu): step 2/2. In Shewanella sp. (strain MR-4), this protein is Glutamate-1-semialdehyde 2,1-aminomutase.